The chain runs to 445 residues: Ribulose bisphosphate carboxylase large chain (445 aa).

Substrate is bound by residues asparagine 89 and threonine 139. Lysine 141 acts as the Proton acceptor in catalysis. Position 143 (lysine 143) interacts with substrate. Mg(2+)-binding residues include lysine 167, aspartate 169, and glutamate 170. Lysine 167 is modified (N6-carboxylysine). Histidine 260 functions as the Proton acceptor in the catalytic mechanism. Positions 261, 293, and 345 each coordinate substrate.

It belongs to the RuBisCO large chain family. Type I subfamily. As to quaternary structure, heterohexadecamer of 8 large chains and 8 small chains; disulfide-linked. The disulfide link is formed within the large subunit homodimers. Mg(2+) serves as cofactor. In terms of processing, the disulfide bond which can form in the large chain dimeric partners within the hexadecamer appears to be associated with oxidative stress and protein turnover.

It is found in the plastid. The protein localises to the chloroplast. It carries out the reaction 2 (2R)-3-phosphoglycerate + 2 H(+) = D-ribulose 1,5-bisphosphate + CO2 + H2O. The catalysed reaction is D-ribulose 1,5-bisphosphate + O2 = 2-phosphoglycolate + (2R)-3-phosphoglycerate + 2 H(+). Functionally, ruBisCO catalyzes two reactions: the carboxylation of D-ribulose 1,5-bisphosphate, the primary event in carbon dioxide fixation, as well as the oxidative fragmentation of the pentose substrate in the photorespiration process. Both reactions occur simultaneously and in competition at the same active site. In Callicarpa dichotoma (Purple beautyberry), this protein is Ribulose bisphosphate carboxylase large chain.